The following is an 81-amino-acid chain: Exodeoxyribonuclease 7 small subunit (81 aa).

The protein belongs to the XseB family. Heterooligomer composed of large and small subunits.

The protein resides in the cytoplasm. It catalyses the reaction Exonucleolytic cleavage in either 5'- to 3'- or 3'- to 5'-direction to yield nucleoside 5'-phosphates.. Functionally, bidirectionally degrades single-stranded DNA into large acid-insoluble oligonucleotides, which are then degraded further into small acid-soluble oligonucleotides. This is Exodeoxyribonuclease 7 small subunit from Pseudomonas syringae pv. syringae (strain B728a).